The following is a 473-amino-acid chain: 3-isopropylmalate dehydratase large subunit (473 aa).

[4Fe-4S] cluster contacts are provided by Cys354, Cys414, and Cys417. The interval 425-448 (LAPGQRSASTSNRNFEGRQGRGGR) is disordered.

It belongs to the aconitase/IPM isomerase family. LeuC type 1 subfamily. As to quaternary structure, heterodimer of LeuC and LeuD. [4Fe-4S] cluster is required as a cofactor.

It catalyses the reaction (2R,3S)-3-isopropylmalate = (2S)-2-isopropylmalate. It participates in amino-acid biosynthesis; L-leucine biosynthesis; L-leucine from 3-methyl-2-oxobutanoate: step 2/4. Catalyzes the isomerization between 2-isopropylmalate and 3-isopropylmalate, via the formation of 2-isopropylmaleate. In Acidothermus cellulolyticus (strain ATCC 43068 / DSM 8971 / 11B), this protein is 3-isopropylmalate dehydratase large subunit.